A 372-amino-acid chain; its full sequence is DNA replication and repair protein RecF (372 aa).

Residue 30–37 (GENGQGKT) participates in ATP binding.

This sequence belongs to the RecF family.

Its subcellular location is the cytoplasm. Its function is as follows. The RecF protein is involved in DNA metabolism; it is required for DNA replication and normal SOS inducibility. RecF binds preferentially to single-stranded, linear DNA. It also seems to bind ATP. The sequence is that of DNA replication and repair protein RecF from Anaeromyxobacter dehalogenans (strain 2CP-C).